The sequence spans 494 residues: Subtilisin-like serine protease Pen ch 18.0101 (494 aa).

An N-terminal signal peptide occupies residues 1-16 (MKGFLSLTLLPLLVAA). The propeptide at 17 to 136 (SPVAVNSIHN…IEKDSEVRTM (120 aa)) is removed in mature form. An Inhibitor I9 domain is found at 43–136 (SYIVVFKKHV…IEKDSEVRTM (94 aa)). Residues 146–448 (PWGLARISHR…GGSANYTKIL (303 aa)) form the Peptidase S8 domain. 2 igE-binding regions span residues 180-198 (VIDT…RANW) and 209-231 (EDGN…GVAK). Residues D182 and H214 each act as charge relay system in the active site. N-linked (GlcNAc...) asparagine glycans are attached at residues N244 and N280. S376 acts as the Charge relay system in catalysis. N443 carries an N-linked (GlcNAc...) asparagine glycan. Residues 454–494 (KAHNAETTVEDRIGIIIDSAEKAFHKELGAIYSEIKDAVSV) constitute a propeptide, removed in mature form.

This sequence belongs to the peptidase S8 family.

Its function is as follows. Serine protease. The protein is Subtilisin-like serine protease Pen ch 18.0101 of Penicillium rubens.